We begin with the raw amino-acid sequence, 68 residues long: Beta-defensin 1 (68 aa).

The signal sequence occupies residues 1 to 21; that stretch reads MRTSYLLLFTLCLLLSEMASG. The propeptide occupies 22–32; it reads DNFLTGLGHRS. 3 disulfides stabilise this stretch: Cys37–Cys66, Cys44–Cys59, and Cys49–Cys67.

It belongs to the beta-defensin family. In terms of assembly, monomer. Homodimer.

It is found in the secreted. The protein resides in the membrane. In terms of biological role, has bactericidal activity. May act as a ligand for C-C chemokine receptor CCR6. Positively regulates the sperm motility and bactericidal activity in a CCR6-dependent manner. Binds to CCR6 and triggers Ca2+ mobilization in the sperm which is important for its motility. The polypeptide is Beta-defensin 1 (DEFB1) (Cercopithecus erythrogaster (Red-bellied monkey)).